Consider the following 1576-residue polypeptide: DExH-box ATP-dependent RNA helicase DExH2 (1576 aa).

Residues 15-78 enclose the R3H domain; the sequence is EATGAWATKV…ERRLSLFKGD (64 aa). A Helicase ATP-binding domain is found at 227–396; it reads ISAVESNQVV…FGGCPVVRVP (170 aa). ATP is bound at residue 240–247; sequence GETGCGKT. Residues 343–346 carry the DEIH box motif; the sequence is DEIH. The Helicase C-terminal domain maps to 561 to 735; sequence LIVKLMKKIC…ELCLQVKMLD (175 aa). Disordered stretches follow at residues 1137–1165, 1177–1223, and 1260–1576; these read ATSPRDDIPSTNPNELREHDPNTTPMGSK, MEES…SLNN, and DMGN…PSDQ. Residues 1281 to 1301 are compositionally biased toward polar residues; it reads PNSANSMDLGNMEENTPSDLA. Residues 1305 to 1319 show a composition bias toward basic and acidic residues; that stretch reads KKKEPKSVSKLDLGS. The PH1 motif lies at 1349-1360; that stretch reads KQPEKKRSRSKK. Over residues 1352-1363 the composition is skewed to basic residues; that stretch reads EKKRSRSKKRKS. Residues 1381–1412 are compositionally biased toward polar residues; the sequence is ANENEQTEPKSANNLDLGNMKENTPSDLANEN. Positions 1454–1465 match the PH2 motif; that stretch reads KQPKKKRSRSKK. Residues 1455–1467 show a composition bias toward basic residues; it reads QPKKKRSRSKKCK. Residues 1490–1508 are compositionally biased toward basic and acidic residues; sequence EQKDPESVNRLDPGKEKES. The span at 1509–1524 shows a compositional bias: polar residues; sequence IPSNLVSGNEQPDSNT. Basic residues predominate over residues 1528–1537; the sequence is KKPKKKKRKL. The Nuclear localization signal motif lies at 1530 to 1537; it reads PKKKKRKL. Residues 1540–1562 show a composition bias toward polar residues; sequence NFDSVNNMEEKMPSTNVLSQGNK.

The protein belongs to the DExH box helicase family. In terms of assembly, homodimer.

The protein localises to the nucleus. The catalysed reaction is ATP + H2O = ADP + phosphate + H(+). Functionally, may function as an ATP-dependent RNA/DNA helicase. Binds DNA in vitro in a non-specific manner. This Arabidopsis thaliana (Mouse-ear cress) protein is DExH-box ATP-dependent RNA helicase DExH2.